Here is a 242-residue protein sequence, read N- to C-terminus: MRPLSMSGHFLLAPIPESSSDYLLPKDIKLAVLGAGRVGKSAMIVRFLTKRFIGDYEPNTGKLYSRLVYVEGDQLSLQIQDTPGGVQIQDSLPQVVDSLSKCVQWAEGFLLVYSITDYDSYLSIRPLYQHIRKVHPDSKAPVIIVGNKGDLLHARQVQTQDGIQLANELGSLFLEISTSENYEDVCDVFQHLCKEVSKMHGLSGERRRASIIPRPRSPNMQDLKRRFKQALSPKVKAPSALG.

The interval 17–241 (ESSSDYLLPK…SPKVKAPSAL (225 aa)) is small GTPase-like. GTP-binding positions include 34 to 41 (GAGRVGKS), 81 to 85 (DTPGG), and 147 to 150 (NKGD).

This sequence belongs to the small GTPase superfamily. Ras family. As to quaternary structure, interacts with UBF/UBTF. As to expression, widely expressed. Down-regulated in prostate tumors compared to normal prostate tissue. High levels found in colon tumor and normal colon tissue followed by small intestine, liver, jejunum, ileum, bladder and aorta. Lowest levels observed in endothelial cells.

It is found in the nucleus. Its subcellular location is the nucleolus. It carries out the reaction GTP + H2O = GDP + phosphate + H(+). Regulator of rDNA transcription. Acts in cooperation UBF/UBTF and positively regulates RNA polymerase I transcription. In Homo sapiens (Human), this protein is Ras-like protein family member 11A.